The primary structure comprises 245 residues: 1-(5-phosphoribosyl)-5-[(5-phosphoribosylamino)methylideneamino] imidazole-4-carboxamide isomerase (245 aa).

The active-site Proton acceptor is the Asp-7. Asp-129 functions as the Proton donor in the catalytic mechanism.

This sequence belongs to the HisA/HisF family.

The protein resides in the cytoplasm. The catalysed reaction is 1-(5-phospho-beta-D-ribosyl)-5-[(5-phospho-beta-D-ribosylamino)methylideneamino]imidazole-4-carboxamide = 5-[(5-phospho-1-deoxy-D-ribulos-1-ylimino)methylamino]-1-(5-phospho-beta-D-ribosyl)imidazole-4-carboxamide. It participates in amino-acid biosynthesis; L-histidine biosynthesis; L-histidine from 5-phospho-alpha-D-ribose 1-diphosphate: step 4/9. This is 1-(5-phosphoribosyl)-5-[(5-phosphoribosylamino)methylideneamino] imidazole-4-carboxamide isomerase from Salmonella enteritidis PT4 (strain P125109).